Consider the following 88-residue polypeptide: Protein transport protein Sec61 subunit beta (88 aa).

The segment at Met-1 to Ser-41 is disordered. The Cytoplasmic segment spans residues Met-1–Pro-60. The helical transmembrane segment at Leu-61–Ala-81 threads the bilayer.

Belongs to the SEC61-beta family. As to quaternary structure, heterotrimeric complex composed of SEC61, SEB1 and SSS1.

Its subcellular location is the endoplasmic reticulum membrane. Its function is as follows. Necessary for protein translocation in the endoplasmic reticulum. This is Protein transport protein Sec61 subunit beta (SBH1) from Kluyveromyces lactis (strain ATCC 8585 / CBS 2359 / DSM 70799 / NBRC 1267 / NRRL Y-1140 / WM37) (Yeast).